We begin with the raw amino-acid sequence, 279 residues long: 3-methyl-2-oxobutanoate hydroxymethyltransferase (279 aa).

Asp-43 and Asp-82 together coordinate Mg(2+). Residues 43-44 (DS), Asp-82, and Lys-112 contribute to the 3-methyl-2-oxobutanoate site. Glu-114 is a Mg(2+) binding site. The active-site Proton acceptor is Glu-181.

Belongs to the PanB family. As to quaternary structure, homodecamer; pentamer of dimers. Requires Mg(2+) as cofactor.

The protein localises to the cytoplasm. The catalysed reaction is 3-methyl-2-oxobutanoate + (6R)-5,10-methylene-5,6,7,8-tetrahydrofolate + H2O = 2-dehydropantoate + (6S)-5,6,7,8-tetrahydrofolate. The protein operates within cofactor biosynthesis; (R)-pantothenate biosynthesis; (R)-pantoate from 3-methyl-2-oxobutanoate: step 1/2. Functionally, catalyzes the reversible reaction in which hydroxymethyl group from 5,10-methylenetetrahydrofolate is transferred onto alpha-ketoisovalerate to form ketopantoate. This chain is 3-methyl-2-oxobutanoate hydroxymethyltransferase, found in Halalkalibacterium halodurans (strain ATCC BAA-125 / DSM 18197 / FERM 7344 / JCM 9153 / C-125) (Bacillus halodurans).